Reading from the N-terminus, the 330-residue chain is Aspartate--ammonia ligase (330 aa).

This sequence belongs to the class-II aminoacyl-tRNA synthetase family. AsnA subfamily.

The protein localises to the cytoplasm. It catalyses the reaction L-aspartate + NH4(+) + ATP = L-asparagine + AMP + diphosphate + H(+). The protein operates within amino-acid biosynthesis; L-asparagine biosynthesis; L-asparagine from L-aspartate (ammonia route): step 1/1. The chain is Aspartate--ammonia ligase from Enterobacter sp. (strain 638).